The primary structure comprises 1770 residues: U3 small nucleolar RNA-associated protein 10 (1770 aa).

A run of 2 helical transmembrane segments spans residues 499–519 (ILGL…FLSS) and 528–548 (LTFL…RLLA). Residues 1730–1768 (MVPIIAELLEDDNEEVESEVRGGLVRVMENVLGEPFDRY) form an HEAT repeat.

It belongs to the HEATR1/UTP10 family. Component of the ribosomal small subunit (SSU) processome.

Its subcellular location is the nucleus. The protein resides in the nucleolus. It localises to the membrane. Its function is as follows. Involved in nucleolar processing of pre-18S ribosomal RNA. Involved in ribosome biosynthesis. This chain is U3 small nucleolar RNA-associated protein 10, found in Candida glabrata (strain ATCC 2001 / BCRC 20586 / JCM 3761 / NBRC 0622 / NRRL Y-65 / CBS 138) (Yeast).